The chain runs to 741 residues: Zinc transporter ZIP6 (741 aa).

The N-terminal stretch at 1–20 (MATNLSVIMILTFALWVTNP) is a signal peptide. At 21–311 (LHELQSTAAF…PKTYSLQIAW (291 aa)) the chain is on the extracellular side. The N-linked (GlcNAc...) asparagine glycan is linked to asparagine 68. Residues 95 to 111 (HDHERHSDHERHSDHER) show a composition bias toward basic and acidic residues. Disordered regions lie at residues 95-172 (HDHE…EVTS) and 189-213 (ETPK…EKSR). Over residues 135 to 147 (DNSGKNPNTSQGK) the composition is skewed to polar residues. Asparagine 142 carries an N-linked (GlcNAc...) asparagine glycan. A compositionally biased stretch (basic and acidic residues) spans 150 to 162 (RPAEHVNGRRNGK). Low complexity predominate over residues 163-172 (ESASSSEVTS). A compositionally biased stretch (polar residues) spans 200 to 209 (INPSTPPSIT). Asparagine 226, asparagine 251, and asparagine 268 each carry an N-linked (GlcNAc...) asparagine glycan. Residues 312–332 (LGGFIAISIISFLSLLGVILV) form a helical membrane-spanning segment. Over 333–341 (PLMNRVFFK) the chain is Cytoplasmic. A helical transmembrane segment spans residues 342 to 362 (FLLSFLVALAVGTLSGDALLH). At 363-409 (LLPHSHASHHHSHSHEEPAMEMKRGPLFSHLSAQNLEESSYFDSTWK) the chain is on the extracellular side. Residues 410-430 (GLTALGGLYFMFLVEHVLTLI) traverse the membrane as a helical segment. The Cytoplasmic portion of the chain corresponds to 431-643 (KQFKDKKKKN…LKAGMTVKQA (213 aa)). The tract at residues 434–494 (KDKKKKNQKK…QEPSPFDSQQ (61 aa)) is disordered. Residues 450–475 (VESKKQLSKYESQLSTNEEKVDTGER) are a coiled coil. Phosphoserine occurs at positions 457 and 464. Residues 466-477 (NEEKVDTGERPE) show a composition bias toward basic and acidic residues. Residues 481 to 494 (QADSQEPSPFDSQQ) show a composition bias toward polar residues. Residues 644–664 (VLYNALSAMLAYLGMATGIFI) form a helical membrane-spanning segment. Topologically, residues 665 to 672 (GHYAENVS) are extracellular. N-linked (GlcNAc...) asparagine glycosylation is present at asparagine 670. A helical transmembrane segment spans residues 673–693 (MWIFALTAGLFMYVALVDMVP). Residues 694-710 (EMLHNDASDHGCSRWGY) are Cytoplasmic-facing. A helical transmembrane segment spans residues 711–731 (FFLQNAGILLGFGIMLLISIF). The Extracellular portion of the chain corresponds to 732-741 (EHKIVFRINF).

It belongs to the ZIP transporter (TC 2.A.5) family. In terms of assembly, interacts with SLC39A10; which triggers cells to undergo EMT and mitosis. Found in a complex with SLC39A6, SLC39A10 and with the 'Ser-727' phosphorylated form of STAT3 throughout mitosis. Found in a complex with SLC39A6, SLC39A10 and with NCAM1; this complex controls NCAM1 phosphorylation and integration into focal adhesion complexes during epithelial-to-mesenchymal transition (EMT). Found in a complex with SLC39A6, SLC39A10 and with GSK3B that controls NCAM1 phosphorylation. In terms of processing, cleaved on the N-terminus before locating to the plasma membrane. Post-translationally, N-glycosylated. Phosphorylated by ZAP70 in response to TCR stimulation leading to its activation. In terms of tissue distribution, expressed in the endothelial cells of the brain capillaries.

It localises to the cell membrane. The protein localises to the cell projection. Its subcellular location is the lamellipodium membrane. It is found in the membrane raft. The protein resides in the apical cell membrane. It carries out the reaction Zn(2+)(in) = Zn(2+)(out). Functionally, zinc-influx transporter which plays a role in zinc homeostasis and in the induction of epithelial-to-mesenchymal transition (EMT). When associated with SLC39A10, the heterodimer formed by SLC39A10 and SLC39A6 mediates cellular zinc uptake to trigger cells to undergo epithelial- to-mesenchymal transition (EMT). The SLC39A10-SLC39A6 heterodimer also controls NCAM1 phosphorylation and its integration into focal adhesion complexes during EMT. Zinc influx inactivates GSK3B, enabling unphosphorylated SNAI1 in the nucleus to down-regulate adherence genes such as CDH1, causing loss of cell adherence. In addition, the SLC39A10-SLC39A6 heterodimer plays an essentiel role in initiating mitosis by importing zinc into cells to initiate a pathway resulting in the onset of mitosis. Participates in the T-cell receptor signaling regulation by mediating cellular zinc uptake into activated lymphocytes. Regulates the zinc influx necessary for proper meiotic progression to metaphase II (MII) that allows the oocyte-to-egg transition. This is Zinc transporter ZIP6 from Rattus norvegicus (Rat).